An 840-amino-acid polypeptide reads, in one-letter code: Urease (840 aa).

The Urease domain occupies 402 to 840 (GAIDCHVHYI…VPLSRNYFLF (439 aa)). Residues His-407, His-409, and Lys-490 each coordinate Ni(2+). Lys-490 carries the post-translational modification N6-carboxylysine. His-492 contacts substrate. His-519 and His-545 together coordinate Ni(2+). Catalysis depends on His-593, which acts as the Proton donor. Ni(2+) is bound at residue Asp-633.

The protein in the C-terminal section; belongs to the metallo-dependent hydrolases superfamily. Urease alpha subunit family. As to quaternary structure, homohexamer. Other oligomeric forms may exist depending on pH and presence of salts. Ni cation serves as cofactor. Carboxylation allows a single lysine to coordinate two nickel ions.

It carries out the reaction urea + 2 H2O + H(+) = hydrogencarbonate + 2 NH4(+). Its pathway is nitrogen metabolism; urea degradation; CO(2) and NH(3) from urea (urease route): step 1/1. P-hydroxymercuribenzoate irreversibly abolishes ureolytic activity, but does not inhibit the ability to activate platelets. Also inhibited by acetohydroxamic acid (AHA), a chelator of Ni2+ and Zn2+ ions. Functionally, urea hydrolase involved in nitrogen recycling from ureide, purine, and arginine catabolism. Is known to be highly toxic and lethal when given by intravenous route, producing convulsions and other signs of central nervous system intoxication associated with the high levels of ammonia formed in the blood of mice and rabbits. Is neurotoxic in mammals, when directly injected into hippocampus. It may induce seizures by acting at a neuronal network level, thereby disturbing electroencephalographic rhythms and causing metabolic alterations in key areas related to epileptogenesis and to neurogenic pulmonary edema. It increases calcium influx and neuronal firing rate in the hippocampus. Is able to insert itself into lipid bilayers, altering physicochemical properties of artificial membranes, and forming cation-selective ion channels. In vitro, has the ability to induce platelet aggregation, platelet granules secretion and release of ATP. In contrast to canatoxin, another urease from C.ensiformis, is not lethal to mice when intraperitoneally injected. The sequence is that of Urease from Canavalia ensiformis (Jack bean).